The sequence spans 424 residues: MFDVVISDIEAREILDSRGYPTLCVKVITNTGTFGEACVPSGASTGIKEALELRDKDPKRYQGKGVLQAISNVEKVLMPALQGFSVFDQITADAIMIDADGTPNKEKLGANAILGVSLALAKAAANTLQRPLYRYLGGSFSHVLPCPMMNLINGGMHATNGLQFQEFMIRPISAPSLTEAVRMGAEVFNALKKILQNRQLATGVGDEGGFAPNLASNAEALDLLLTAIETAGFTPREDISLALDCAASSFYNTQDKTYDGKSYADQVGILAELCEHYPIDSIEDGLAEEDFEGWKLLSETLGDRVQLVGDDLFVTNSALIAEGIAQGLANAVLIKPNQIGTLTETAEAIRLATIQGYATILSHRSGETEDTTIADLAVAFNTGQIKTGSLSRSERIAKYNRLMAIEEEMGPEALFQDSNPFSKA.

Gln165 contacts (2R)-2-phosphoglycerate. Catalysis depends on Glu207, which acts as the Proton donor. Residues Asp244, Glu283, and Asp310 each contribute to the Mg(2+) site. The (2R)-2-phosphoglycerate site is built by Lys335, Arg364, Ser365, and Lys386. The Proton acceptor role is filled by Lys335.

It belongs to the enolase family. The cofactor is Mg(2+).

It is found in the cytoplasm. Its subcellular location is the secreted. The protein localises to the cell surface. It catalyses the reaction (2R)-2-phosphoglycerate = phosphoenolpyruvate + H2O. It functions in the pathway carbohydrate degradation; glycolysis; pyruvate from D-glyceraldehyde 3-phosphate: step 4/5. Its function is as follows. Catalyzes the reversible conversion of 2-phosphoglycerate (2-PG) into phosphoenolpyruvate (PEP). It is essential for the degradation of carbohydrates via glycolysis. This chain is Enolase, found in Chlamydia trachomatis serovar D (strain ATCC VR-885 / DSM 19411 / UW-3/Cx).